The chain runs to 285 residues: Probable endonuclease 4 (285 aa).

9 residues coordinate Zn(2+): His69, His109, Glu145, Asp179, His182, His216, Asp229, His231, and Glu261.

Belongs to the AP endonuclease 2 family. Requires Zn(2+) as cofactor.

It carries out the reaction Endonucleolytic cleavage to 5'-phosphooligonucleotide end-products.. Endonuclease IV plays a role in DNA repair. It cleaves phosphodiester bonds at apurinic or apyrimidinic (AP) sites, generating a 3'-hydroxyl group and a 5'-terminal sugar phosphate. This is Probable endonuclease 4 from Cronobacter sakazakii (strain ATCC BAA-894) (Enterobacter sakazakii).